We begin with the raw amino-acid sequence, 252 residues long: Imidazole glycerol phosphate synthase subunit HisF (252 aa).

Active-site residues include Asp-11 and Asp-130.

It belongs to the HisA/HisF family. In terms of assembly, heterodimer of HisH and HisF.

It localises to the cytoplasm. The catalysed reaction is 5-[(5-phospho-1-deoxy-D-ribulos-1-ylimino)methylamino]-1-(5-phospho-beta-D-ribosyl)imidazole-4-carboxamide + L-glutamine = D-erythro-1-(imidazol-4-yl)glycerol 3-phosphate + 5-amino-1-(5-phospho-beta-D-ribosyl)imidazole-4-carboxamide + L-glutamate + H(+). It participates in amino-acid biosynthesis; L-histidine biosynthesis; L-histidine from 5-phospho-alpha-D-ribose 1-diphosphate: step 5/9. In terms of biological role, IGPS catalyzes the conversion of PRFAR and glutamine to IGP, AICAR and glutamate. The HisF subunit catalyzes the cyclization activity that produces IGP and AICAR from PRFAR using the ammonia provided by the HisH subunit. This Thermococcus onnurineus (strain NA1) protein is Imidazole glycerol phosphate synthase subunit HisF.